The chain runs to 457 residues: Phosphomethylpyrimidine synthase (457 aa).

Residues N88, M117, Y146, H182, 204–206 (SRG), 245–248 (DACR), and E284 each bind substrate. Zn(2+) is bound at residue H288. Residue Y311 coordinates substrate. Zn(2+) is bound at residue H352. [4Fe-4S] cluster-binding residues include C428, C431, and C435.

Belongs to the ThiC family. It depends on [4Fe-4S] cluster as a cofactor.

The catalysed reaction is 5-amino-1-(5-phospho-beta-D-ribosyl)imidazole + S-adenosyl-L-methionine = 4-amino-2-methyl-5-(phosphooxymethyl)pyrimidine + CO + 5'-deoxyadenosine + formate + L-methionine + 3 H(+). It participates in cofactor biosynthesis; thiamine diphosphate biosynthesis. Catalyzes the synthesis of the hydroxymethylpyrimidine phosphate (HMP-P) moiety of thiamine from aminoimidazole ribotide (AIR) in a radical S-adenosyl-L-methionine (SAM)-dependent reaction. The chain is Phosphomethylpyrimidine synthase from Clostridium tetani (strain Massachusetts / E88).